Reading from the N-terminus, the 193-residue chain is Holliday junction branch migration complex subunit RuvA (193 aa).

Residues 1–64 (MIGRIAGILL…EDAHLLYGFL (64 aa)) are domain I. The interval 65 to 139 (TPQERTTFRE…GKLGADLGAL (75 aa)) is domain II. The segment at 139–143 (LAGAA) is flexible linker. Residues 144–193 (SQSDHAADILNALVALGYSEKEGLAAIKNVPAGTGVSEGIKLALKALSKV) are domain III.

It belongs to the RuvA family. Homotetramer. Forms an RuvA(8)-RuvB(12)-Holliday junction (HJ) complex. HJ DNA is sandwiched between 2 RuvA tetramers; dsDNA enters through RuvA and exits via RuvB. An RuvB hexamer assembles on each DNA strand where it exits the tetramer. Each RuvB hexamer is contacted by two RuvA subunits (via domain III) on 2 adjacent RuvB subunits; this complex drives branch migration. In the full resolvosome a probable DNA-RuvA(4)-RuvB(12)-RuvC(2) complex forms which resolves the HJ.

It is found in the cytoplasm. In terms of biological role, the RuvA-RuvB-RuvC complex processes Holliday junction (HJ) DNA during genetic recombination and DNA repair, while the RuvA-RuvB complex plays an important role in the rescue of blocked DNA replication forks via replication fork reversal (RFR). RuvA specifically binds to HJ cruciform DNA, conferring on it an open structure. The RuvB hexamer acts as an ATP-dependent pump, pulling dsDNA into and through the RuvAB complex. HJ branch migration allows RuvC to scan DNA until it finds its consensus sequence, where it cleaves and resolves the cruciform DNA. The polypeptide is Holliday junction branch migration complex subunit RuvA (Burkholderia ambifaria (strain ATCC BAA-244 / DSM 16087 / CCUG 44356 / LMG 19182 / AMMD) (Burkholderia cepacia (strain AMMD))).